Reading from the N-terminus, the 690-residue chain is Rho guanine nucleotide exchange factor 4 (690 aa).

The segment at 73–126 (KTQRKKLQKQAHVERRLHIGAVHKDGVKCWRKTIITSPESLNLPRRSHPLSQSA) is ABR (APC-binding region) domain. Residues 113–145 (LNLPRRSHPLSQSAPTGLNHMGWPEHTPGTAMP) are disordered. The 60-residue stretch at 194 to 253 (GSVVCAEALWDHVTMDDQELGFKAGDVIEVMDATNREWWWGRVADGEGWFPASFVRLRVN) folds into the SH3 domain. Residues 257-282 (PADDDAPLAGNSGAEDGGAEAQSSKD) form a disordered region. A DH domain is found at 284 to 468 (MRTNVINEIL…KNVAQLINER (185 aa)). The 108-residue stretch at 499–606 (ELIYSGELTR…WLKAFARERE (108 aa)) folds into the PH domain.

Isoform 3 interacts with RHOA and RAC1, and (via ABR domain) with APC. Found in a complex consisting of ARHGEF4, APC and CTNNB1. As to expression, expressed at high levels in the brain, skeletal muscle and testis and at low levels in the kidney, lung, small intestine, ovary and prostate. Expression is aberrantly enhanced in most colorectal tumors.

The protein resides in the cytoplasm. It is found in the cell projection. The protein localises to the ruffle membrane. In terms of biological role, acts as a guanine nucleotide exchange factor (GEF) for RHOA, RAC1 and CDC42 GTPases. Binding of APC may activate RAC1 GEF activity. The APC-ARHGEF4 complex seems to be involved in cell migration as well as in E-cadherin-mediated cell-cell adhesion. Required for MMP9 up-regulation via the JNK signaling pathway in colorectal tumor cells. Involved in tumor angiogenesis and may play a role in intestinal adenoma formation and tumor progression. This Homo sapiens (Human) protein is Rho guanine nucleotide exchange factor 4 (ARHGEF4).